Reading from the N-terminus, the 250-residue chain is Ribonuclease PH (250 aa).

Phosphate is bound by residues R87 and 125–127 (GTR).

This sequence belongs to the RNase PH family. As to quaternary structure, homohexameric ring arranged as a trimer of dimers.

The catalysed reaction is tRNA(n+1) + phosphate = tRNA(n) + a ribonucleoside 5'-diphosphate. Phosphorolytic 3'-5' exoribonuclease that plays an important role in tRNA 3'-end maturation. Removes nucleotide residues following the 3'-CCA terminus of tRNAs; can also add nucleotides to the ends of RNA molecules by using nucleoside diphosphates as substrates, but this may not be physiologically important. Probably plays a role in initiation of 16S rRNA degradation (leading to ribosome degradation) during starvation. This Moorella thermoacetica (strain ATCC 39073 / JCM 9320) protein is Ribonuclease PH.